The sequence spans 222 residues: Charged multivesicular body protein 2a (222 aa).

Residue M1 is modified to N-acetylmethionine. A coiled-coil region spans residues 12 to 53 (EELLRQNQRALNRAMRELDRERQKLETQEKKIIADIKKMAKQ). An interaction with VPS4B region spans residues 56–222 (MDAVRIMAKD…EERLKNLRRD (167 aa)). Positions 179–188 (LSNLPSTGGS) are enriched in polar residues. A disordered region spans residues 179-198 (LSNLPSTGGSLSVAAGGKKA). S184 is subject to Phosphoserine. Residue T185 is modified to Phosphothreonine. Phosphoserine occurs at positions 188, 190, and 203. Positions 195–222 (GKKAEATASALADADADLEERLKNLRRD) form a coiled coil. The short motif at 210–220 (ADLEERLKNLR) is the MIT-interacting motif element. Positions 217–222 (KNLRRD) are interaction with VTA1.

It belongs to the SNF7 family. In terms of assembly, probable core component of the endosomal sorting required for transport complex III (ESCRT-III). ESCRT-III components are thought to multimerize to form a flat lattice on the perimeter membrane of the endosome. Several assembly forms of ESCRT-III may exist that interact and act sequentially. In vitro, heteromerizes with CHMP3 (but not CHMP4) to form helical tubular structures that expose membrane-interacting sites on the outside whereas VPS4B can associate on the inside of the tubule. Interacts with CHMP1B, CHMP2B, CHMP3, CHMP4A, CHMP4B, CHMP4C and CHMP5. Interacts with VPS4A; the interaction is direct. Interacts with VPS4B; the interaction is direct. Interacts with MITD1. Interacts with VTA1; the interaction probably involves the open conformation of CHMP2A. Post-translationally, ISGylated in a CHMP5-dependent manner. Isgylation weakens and inhibits its interactions with VPS4A and VTA1 respectively. Widely expressed. Highly expressed in brain, heart, liver and kidney.

It is found in the late endosome membrane. Its subcellular location is the cytoplasm. The protein localises to the nucleus envelope. In terms of biological role, probable core component of the endosomal sorting required for transport complex III (ESCRT-III) which is involved in multivesicular bodies (MVBs) formation and sorting of endosomal cargo proteins into MVBs. MVBs contain intraluminal vesicles (ILVs) that are generated by invagination and scission from the limiting membrane of the endosome and mostly are delivered to lysosomes enabling degradation of membrane proteins, such as stimulated growth factor receptors, lysosomal enzymes and lipids. The MVB pathway appears to require the sequential function of ESCRT-O, -I,-II and -III complexes. ESCRT-III proteins mostly dissociate from the invaginating membrane before the ILV is released. The ESCRT machinery also functions in topologically equivalent membrane fission events, such as the terminal stages of cytokinesis. Together with SPAST, the ESCRT-III complex promotes nuclear envelope sealing and mitotic spindle disassembly during late anaphase. Recruited to the reforming nuclear envelope (NE) during anaphase by LEMD2. ESCRT-III proteins are believed to mediate the necessary vesicle extrusion and/or membrane fission activities, possibly in conjunction with the AAA ATPase VPS4. The protein is Charged multivesicular body protein 2a (Chmp2a) of Mus musculus (Mouse).